Consider the following 314-residue polypeptide: DNA-directed RNA polymerase subunit alpha (314 aa).

The tract at residues 1 to 228 (MAQYTIECVE…DQLRPLQEIT (228 aa)) is alpha N-terminal domain (alpha-NTD). Residues 241–314 (NTVGQVPIEE…SLPKDKPARS (74 aa)) are alpha C-terminal domain (alpha-CTD).

The protein belongs to the RNA polymerase alpha chain family. In cyanobacteria the RNAP catalytic core is composed of 2 alpha, 1 beta, 1 beta', 1 gamma and 1 omega subunit. When a sigma factor is associated with the core the holoenzyme is formed, which can initiate transcription.

It carries out the reaction RNA(n) + a ribonucleoside 5'-triphosphate = RNA(n+1) + diphosphate. Its function is as follows. DNA-dependent RNA polymerase catalyzes the transcription of DNA into RNA using the four ribonucleoside triphosphates as substrates. This Gloeobacter violaceus (strain ATCC 29082 / PCC 7421) protein is DNA-directed RNA polymerase subunit alpha.